The following is a 61-amino-acid chain: Metallothionein-1F (61 aa).

Met1 carries the post-translational modification N-acetylmethionine. Positions 1 to 29 (MDPNCSCPTGGSCTCAGSCTCKACRCTSC) are beta. 18 residues coordinate a divalent metal cation: Cys5, Cys7, Cys13, Cys15, Cys19, Cys21, Cys24, Cys26, Cys29, Cys33, Cys34, Cys36, Cys37, Cys41, Cys44, Cys48, Cys50, and Cys57. Residues 30–61 (KKSCCSCCPAGCAKCAQGCICKGASDKCSCCA) form an alpha region. Ser58 is subject to Phosphoserine. Residues Cys59 and Cys60 each contribute to the a divalent metal cation site.

Belongs to the metallothionein superfamily. Type 1 family. As to quaternary structure, monomer.

In terms of biological role, metallothioneins have a high content of cysteine residues that bind various heavy metals; these proteins are transcriptionally regulated by both heavy metals and glucocorticoids. This Sus scrofa (Pig) protein is Metallothionein-1F (MT1F).